Here is a 174-residue protein sequence, read N- to C-terminus: Repair DNA polymerase X (174 aa).

The segment at 42-51 is involved in ssDNA binding; it reads REEKMLNDVD. Residues Asp49 and Asp51 each contribute to the Mg(2+) site. Cys81 and Cys86 are disulfide-bonded. Asp100 serves as a coordination point for Mg(2+).

Belongs to the DNA polymerase type-X family. The cofactor is Mg(2+).

The protein resides in the virion. It catalyses the reaction DNA(n) + a 2'-deoxyribonucleoside 5'-triphosphate = DNA(n+1) + diphosphate. In terms of biological role, error-prone polymerase lacking a proofreading 3'-5' exonuclease which catalyzes the gap-filling reaction during the DNA repair process. Specifically binds intermediates in the single-nucleotide base-excision repair process. Also catalyzes DNA polymerization with low nucleotide-insertion fidelity. Probably acts as a strategic DNA mutase, which gives rise to a rapid emergence of variants. Generates mismatched G-G pairs, in that case, the polymerase first binds the deoxynucleotide followed by mismatch formation. Together with the viral DNA ligase, fills the single nucleotide gaps generated by the AP endonuclease. Binds DNA with high affinity via the helix alphaE. This is Repair DNA polymerase X from Ornithodoros (relapsing fever ticks).